An 88-amino-acid chain; its full sequence is Small ribosomal subunit protein uS15 (88 aa).

The protein belongs to the universal ribosomal protein uS15 family. As to quaternary structure, part of the 30S ribosomal subunit. Forms a bridge to the 50S subunit in the 70S ribosome, contacting the 23S rRNA.

Its function is as follows. One of the primary rRNA binding proteins, it binds directly to 16S rRNA where it helps nucleate assembly of the platform of the 30S subunit by binding and bridging several RNA helices of the 16S rRNA. In terms of biological role, forms an intersubunit bridge (bridge B4) with the 23S rRNA of the 50S subunit in the ribosome. This chain is Small ribosomal subunit protein uS15, found in Methylacidiphilum infernorum (isolate V4) (Methylokorus infernorum (strain V4)).